The following is a 694-amino-acid chain: Long-chain-fatty-acid--CoA ligase 3 (694 aa).

Residues 1-25 (MSEQHSVAVGKAANEHETAPRRNVR) are disordered. Serine 2 is modified (N-acetylserine). ATP is bound at residue 269-280 (YTSGSISAPKGV). Positions 527-576 (DGWFRTGDIVEWTPKGQLKIIDRRKNLVKTLNGEYIALEKLESVYRSNSY) match the FACS motif.

This sequence belongs to the ATP-dependent AMP-binding enzyme family. As to quaternary structure, interacts with FRK1. Mg(2+) serves as cofactor.

It localises to the cell membrane. The catalysed reaction is a long-chain fatty acid + ATP + CoA = a long-chain fatty acyl-CoA + AMP + diphosphate. It catalyses the reaction (9Z)-octadecenoate + ATP + CoA = (9Z)-octadecenoyl-CoA + AMP + diphosphate. The enzyme catalyses hexadecanoate + ATP + CoA = hexadecanoyl-CoA + AMP + diphosphate. It carries out the reaction (9Z)-hexadecenoate + ATP + CoA = (9Z)-hexadecenoyl-CoA + AMP + diphosphate. The catalysed reaction is (9Z)-tetradecenoate + ATP + CoA = (9Z)-tetradecenoyl-CoA + AMP + diphosphate. It catalyses the reaction (9Z,12Z)-octadecadienoate + ATP + CoA = (9Z,12Z)-octadecadienoyl-CoA + AMP + diphosphate. Activates endogenous long-chain fatty acids (LCFA) by esterification of the fatty acids into metabolically active CoA-thioesters for subsequent degradation or incorporation into phospholipids. Acts preferentially on C16 and C18 fatty acids with a cis-double bond at C-9-C-10. This is Long-chain-fatty-acid--CoA ligase 3 (FAA3) from Saccharomyces cerevisiae (strain ATCC 204508 / S288c) (Baker's yeast).